The primary structure comprises 89 residues: Small ribosomal subunit protein uS14A (89 aa).

Belongs to the universal ribosomal protein uS14 family. Part of the 30S ribosomal subunit. Contacts proteins S3 and S10.

Functionally, binds 16S rRNA, required for the assembly of 30S particles and may also be responsible for determining the conformation of the 16S rRNA at the A site. In Listeria innocua serovar 6a (strain ATCC BAA-680 / CLIP 11262), this protein is Small ribosomal subunit protein uS14A.